A 62-amino-acid chain; its full sequence is Large ribosomal subunit protein bL33 (62 aa).

It belongs to the bacterial ribosomal protein bL33 family.

In Bacteroides thetaiotaomicron (strain ATCC 29148 / DSM 2079 / JCM 5827 / CCUG 10774 / NCTC 10582 / VPI-5482 / E50), this protein is Large ribosomal subunit protein bL33.